The sequence spans 223 residues: RNA polymerase sigma-H factor (223 aa).

Positions 67–80 (DIVQEGMIGLYKSI) match the Polymerase core binding motif. Positions 187 to 206 (YQEISEELNRHVKSIDNALQ) form a DNA-binding region, H-T-H motif.

It belongs to the sigma-70 factor family.

Sigma factors are initiation factors that promote the attachment of RNA polymerase to specific initiation sites and are then released. This sigma factor is involved in the transition to post-exponential phase in the beginning of sporulation. The polypeptide is RNA polymerase sigma-H factor (sigH) (Bacillus licheniformis).